The chain runs to 208 residues: 3-demethoxyubiquinol 3-hydroxylase (208 aa).

Residues Glu57, Glu87, His90, Glu139, Glu171, and His174 each coordinate Fe cation.

This sequence belongs to the COQ7 family. Requires Fe cation as cofactor.

Its subcellular location is the cell membrane. It catalyses the reaction a 5-methoxy-2-methyl-3-(all-trans-polyprenyl)benzene-1,4-diol + AH2 + O2 = a 3-demethylubiquinol + A + H2O. It functions in the pathway cofactor biosynthesis; ubiquinone biosynthesis. Its function is as follows. Catalyzes the hydroxylation of 2-nonaprenyl-3-methyl-6-methoxy-1,4-benzoquinol during ubiquinone biosynthesis. In Burkholderia ambifaria (strain ATCC BAA-244 / DSM 16087 / CCUG 44356 / LMG 19182 / AMMD) (Burkholderia cepacia (strain AMMD)), this protein is 3-demethoxyubiquinol 3-hydroxylase.